A 126-amino-acid polypeptide reads, in one-letter code: Probable 4-amino-4-deoxy-L-arabinose-phosphoundecaprenol flippase subunit ArnF (126 aa).

The Cytoplasmic portion of the chain corresponds to 1-4 (MKGY). The helical transmembrane segment at 5 to 25 (IWGLISVLLVTIAQLLLKWGV) threads the bilayer. Topologically, residues 26–49 (VNLPALNLGLHWFDIEWLWSHRHS) are periplasmic. Residues 50–70 (LVAVMAGLAGYLLSMLCWLFT) form a helical membrane-spanning segment. Residues 71 to 79 (LKYLPLNKA) are Cytoplasmic-facing. A helical transmembrane segment spans residues 80–100 (YPLISLSYVFVYLMVALLPWF). Topologically, residues 101–102 (NE) are periplasmic. The chain crosses the membrane as a helical span at residues 103–123 (TITLLKTAGVIFILYGVWLIS). The Cytoplasmic portion of the chain corresponds to 124-126 (RPE).

The protein belongs to the ArnF family. Heterodimer of ArnE and ArnF.

The protein localises to the cell inner membrane. It participates in bacterial outer membrane biogenesis; lipopolysaccharide biosynthesis. In terms of biological role, translocates 4-amino-4-deoxy-L-arabinose-phosphoundecaprenol (alpha-L-Ara4N-phosphoundecaprenol) from the cytoplasmic to the periplasmic side of the inner membrane. The polypeptide is Probable 4-amino-4-deoxy-L-arabinose-phosphoundecaprenol flippase subunit ArnF (Photorhabdus laumondii subsp. laumondii (strain DSM 15139 / CIP 105565 / TT01) (Photorhabdus luminescens subsp. laumondii)).